Reading from the N-terminus, the 133-residue chain is L-cystatin (133 aa).

The signal sequence occupies residues 1-19; the sequence is MEGYNILAVLIILVGVSMG. Gln20 is modified (pyrrolidone carboxylic acid). Residues 67-71 carry the Secondary area of contact motif; sequence QVVSG. Intrachain disulfides connect Cys85-Cys98 and Cys109-Cys129.

It belongs to the cystatin family. In terms of tissue distribution, expressed in hemocytes and slightly in heart.

It localises to the cytoplasmic granule. Functionally, tight-binding inhibitor for papain. It has an important role in the protection of cells, antimicrobial activity against Gram-negative bacteria, defense against invading microbes, and response to external stimuli. The sequence is that of L-cystatin from Tachypleus tridentatus (Japanese horseshoe crab).